The primary structure comprises 166 residues: Phosphopantetheine adenylyltransferase (166 aa).

Residue Ser-8 coordinates substrate. ATP-binding positions include 8–9 (SF) and His-16. Positions 40, 72, and 86 each coordinate substrate. ATP-binding positions include 87–89 (GLR), Glu-97, and 122–128 (YSFLSSS).

This sequence belongs to the bacterial CoaD family. As to quaternary structure, homohexamer. The cofactor is Mg(2+).

It localises to the cytoplasm. It carries out the reaction (R)-4'-phosphopantetheine + ATP + H(+) = 3'-dephospho-CoA + diphosphate. The protein operates within cofactor biosynthesis; coenzyme A biosynthesis; CoA from (R)-pantothenate: step 4/5. Functionally, reversibly transfers an adenylyl group from ATP to 4'-phosphopantetheine, yielding dephospho-CoA (dPCoA) and pyrophosphate. This is Phosphopantetheine adenylyltransferase from Synechococcus elongatus (strain ATCC 33912 / PCC 7942 / FACHB-805) (Anacystis nidulans R2).